A 75-amino-acid chain; its full sequence is Bacteriocin lactacin-F subunit LafA (75 aa).

Positions 1 to 18 (MKQFNYLSHKDLAVVVGG) are excised as a propeptide.

The protein belongs to the bacteriocin class IIB family. This bacteriocin depends upon the complementation of two peptides for activity: LafA and LafX. Associated with a 180 kDa bacteriocin complex.

Its function is as follows. Heat stable bacteriocin active against Enterococcus faecalis and other Lactobacilli. This chain is Bacteriocin lactacin-F subunit LafA (lafA), found in Lactobacillus johnsonii (strain CNCM I-12250 / La1 / NCC 533).